The sequence spans 334 residues: Serine/Arginine-related protein 53 (334 aa).

Basic and acidic residues predominate over residues 1–13; the sequence is MGRRSSDTEEESR. Disordered stretches follow at residues 1 to 179, 198 to 220, and 246 to 290; these read MGRR…HLPP, DEAL…EDQA, and RSSK…SIPT. Residues 14–24 are compositionally biased toward basic residues; that stretch reads SKRKKKHRRRS. Residues 44-62 are compositionally biased toward basic and acidic residues; sequence PRSDSRSWSRDRQLRSHSY. Over residues 78–118 the composition is skewed to basic residues; the sequence is SRRKRSRSRSRGRGKPYRVQRSRSKSRTRRSRSRPRPRSHS. Composition is skewed to basic and acidic residues over residues 132–166, 198–218, and 247–256; these read RSRD…KRGD, DEAL…KEED, and SSKDVKKAVE. Positions 180–236 form a coiled coil; it reads AEQAKARLQLVLEAAAKADEALKAKERSEEEAKRRKEEDQATLVEQVKRVKEIEAIE. Residues 265–278 show a composition bias toward low complexity; sequence AASGPASAAAEPPS.

As to quaternary structure, interacts (via Arg/Ser-rich domain) with LUC7L3, RBM39 and RSF1. Phosphorylated.

Its subcellular location is the nucleus. It is found in the nucleus speckle. The protein resides in the cytoplasm. In terms of biological role, plays a role in pre-mRNA splicing. Involved in both constitutive and alternative pre-mRNA splicing. May have a role in the recognition of the 3' splice site during the second step of splicing. This Mus musculus (Mouse) protein is Serine/Arginine-related protein 53 (Rsrc1).